Reading from the N-terminus, the 37-residue chain is Bactericidin B-3 (37 aa).

Glycine 37 is subject to Glycine amide.

The protein belongs to the cecropin family.

It localises to the secreted. Functionally, cecropins have lytic and antibacterial activity against several Gram-positive and Gram-negative bacteria. The polypeptide is Bactericidin B-3 (Manduca sexta (Tobacco hawkmoth)).